Here is a 771-residue protein sequence, read N- to C-terminus: DNA helicase/primase complex-associated protein (771 aa).

This sequence belongs to the herpesviridae HEPA family. Associates with the primase and the helicase to form the helicase-primase complex. Interacts with the origin-binding protein. Interacts with the polymerase catalytic subunit.

The protein localises to the host nucleus. In terms of biological role, component of the helicase/primase complex. Unwinds the DNA at the replication forks and generates single-stranded DNA for both leading and lagging strand synthesis. The primase synthesizes short RNA primers on the lagging strand that the polymerase presumably elongates using dNTPs. The primase-associated factor has no known catalytic activity in the complex and may serve to facilitate the formation of the replisome by directly interacting with the origin-binding protein and the polymerase. The protein is DNA helicase/primase complex-associated protein of Homo sapiens (Human).